A 110-amino-acid polypeptide reads, in one-letter code: Phosphoribosyl-ATP pyrophosphatase (110 aa).

Belongs to the PRA-PH family.

The protein localises to the cytoplasm. The enzyme catalyses 1-(5-phospho-beta-D-ribosyl)-ATP + H2O = 1-(5-phospho-beta-D-ribosyl)-5'-AMP + diphosphate + H(+). The protein operates within amino-acid biosynthesis; L-histidine biosynthesis; L-histidine from 5-phospho-alpha-D-ribose 1-diphosphate: step 2/9. This Pseudomonas fluorescens (strain SBW25) protein is Phosphoribosyl-ATP pyrophosphatase.